Here is a 1694-residue protein sequence, read N- to C-terminus: Immunoglobulin A1 protease autotransporter (1694 aa).

An N-terminal signal peptide occupies residues 1-25 (MLNKKFKLNFIALTVAYALTPYTEA). The 307-residue stretch at 26 to 332 (ALVRDDVDYQ…NIYKPEFAKT (307 aa)) folds into the Peptidase S6 domain. Ser288 is a catalytic residue. The segment at 991-1403 (VEKRNQTVDT…GSDRSTVALR (413 aa)) is disordered. Residues 997 to 1021 (TVDTTNITTPNNIQADVPSVPSNNE) are compositionally biased toward polar residues. Positions 1037 to 1047 (TPSETTETVAE) are enriched in low complexity. The span at 1049–1061 (SKQESKTVEKNEQ) shows a compositional bias: basic and acidic residues. A compositionally biased stretch (polar residues) spans 1082–1095 (KANTQTNEVAQSGS). Basic and acidic residues-rich tracts occupy residues 1104-1124 (EIKETAKVEKEEKAKVEKDEI) and 1142-1154 (APKEVSTDTKVEE). Polar residues-rich tracts occupy residues 1155–1178 (TQVQAQPQTQSTTVAAAEATSPNS) and 1199–1210 (VSKNQTENTTDQ). Positions 1211–1226 (PTEREKTAKVETEKTQ) are enriched in basic and acidic residues. Polar residues-rich tracts occupy residues 1227–1247 (EPPQVASQASPKQEQSETVQP), 1255–1297 (NVPT…TAIT), and 1308–1336 (TETAASTEDASQHKANTVADNSVANNSES). Low complexity predominate over residues 1352 to 1370 (ETSAEETTAASTDETTIAD). Over residues 1374–1384 (RSKPNRRSRRS) the composition is skewed to basic residues. Residues 1442–1694 (NNEGQYNVWV…TAELKLSFSF (253 aa)) enclose the Autotransporter domain.

It localises to the periplasm. Its subcellular location is the secreted. The protein resides in the cell surface. The protein localises to the cell outer membrane. It catalyses the reaction Cleavage of immunoglobulin A molecules at certain Pro-|-Xaa bonds in the hinge region. No small molecule substrates are known.. Its function is as follows. Virulence factor; cleaves host immunoglobulin A producing intact Fc and Fab fragments. This chain is Immunoglobulin A1 protease autotransporter (iga), found in Haemophilus influenzae (strain ATCC 51907 / DSM 11121 / KW20 / Rd).